The primary structure comprises 119 residues: Large ribosomal subunit protein bL20 (119 aa).

It belongs to the bacterial ribosomal protein bL20 family.

Binds directly to 23S ribosomal RNA and is necessary for the in vitro assembly process of the 50S ribosomal subunit. It is not involved in the protein synthesizing functions of that subunit. The chain is Large ribosomal subunit protein bL20 from Shewanella sediminis (strain HAW-EB3).